The sequence spans 562 residues: Phosphoenolpyruvate carboxykinase (ATP) (562 aa).

265 to 272 (GLSGTGKT) lines the ATP pocket.

Belongs to the phosphoenolpyruvate carboxykinase (ATP) family.

The enzyme catalyses oxaloacetate + ATP = phosphoenolpyruvate + ADP + CO2. The protein operates within carbohydrate biosynthesis; gluconeogenesis. This chain is Phosphoenolpyruvate carboxykinase (ATP) (pckA), found in Dictyostelium discoideum (Social amoeba).